Here is a 150-residue protein sequence, read N- to C-terminus: Large ribosomal subunit protein uL15 (150 aa).

Positions 1–52 are disordered; sequence MDLSNLKPAEGSVRKNSKRIGRGEGSGKGGTATRGHKGAKSRSGYSKKIGFE. Positions 23-32 are enriched in gly residues; sequence GEGSGKGGTA.

The protein belongs to the universal ribosomal protein uL15 family. As to quaternary structure, part of the 50S ribosomal subunit.

Its function is as follows. Binds to the 23S rRNA. This chain is Large ribosomal subunit protein uL15, found in Christiangramia forsetii (strain DSM 17595 / CGMCC 1.15422 / KT0803) (Gramella forsetii).